Consider the following 94-residue polypeptide: uncharacterized protein (94 aa).

Residues 1 to 23 (MVLLAGTRPQGGEARCMIPPPPS) are disordered.

This is an uncharacterized protein from Homo sapiens (Human).